Here is a 136-residue protein sequence, read N- to C-terminus: Phosphoribosyl-AMP cyclohydrolase (136 aa).

Aspartate 89 serves as a coordination point for Mg(2+). Cysteine 90 contributes to the Zn(2+) binding site. 2 residues coordinate Mg(2+): aspartate 91 and aspartate 93. The Zn(2+) site is built by cysteine 106 and cysteine 113.

Belongs to the PRA-CH family. Homodimer. Mg(2+) is required as a cofactor. Zn(2+) serves as cofactor.

The protein localises to the cytoplasm. It catalyses the reaction 1-(5-phospho-beta-D-ribosyl)-5'-AMP + H2O = 1-(5-phospho-beta-D-ribosyl)-5-[(5-phospho-beta-D-ribosylamino)methylideneamino]imidazole-4-carboxamide. The protein operates within amino-acid biosynthesis; L-histidine biosynthesis; L-histidine from 5-phospho-alpha-D-ribose 1-diphosphate: step 3/9. In terms of biological role, catalyzes the hydrolysis of the adenine ring of phosphoribosyl-AMP. The chain is Phosphoribosyl-AMP cyclohydrolase from Bifidobacterium longum subsp. infantis (strain ATCC 15697 / DSM 20088 / JCM 1222 / NCTC 11817 / S12).